Reading from the N-terminus, the 30-residue chain is ALWKNMLKGIGKLAGQAALGAVKTLVGAES.

In terms of tissue distribution, expressed by the skin glands.

It is found in the secreted. Antibacterial activity against Gram-positive bacteria S.aureus and E.faecalis, and Gram-negative bacteria P.aeruginosa and E.coli. This chain is Dermaseptin-DI4, found in Phyllomedusa distincta (Monkey frog).